The following is a 166-amino-acid chain: NAD(P)H-quinone oxidoreductase subunit I, chloroplastic (166 aa).

2 4Fe-4S ferredoxin-type domains span residues 55–84 and 95–124; these read GRIH…VDWK and LNYS…MTEE. The [4Fe-4S] cluster site is built by cysteine 64, cysteine 67, cysteine 70, cysteine 74, cysteine 104, cysteine 107, cysteine 110, and cysteine 114.

This sequence belongs to the complex I 23 kDa subunit family. In terms of assembly, NDH is composed of at least 16 different subunits, 5 of which are encoded in the nucleus. [4Fe-4S] cluster serves as cofactor.

The protein resides in the plastid. The protein localises to the chloroplast thylakoid membrane. The enzyme catalyses a plastoquinone + NADH + (n+1) H(+)(in) = a plastoquinol + NAD(+) + n H(+)(out). It carries out the reaction a plastoquinone + NADPH + (n+1) H(+)(in) = a plastoquinol + NADP(+) + n H(+)(out). Functionally, NDH shuttles electrons from NAD(P)H:plastoquinone, via FMN and iron-sulfur (Fe-S) centers, to quinones in the photosynthetic chain and possibly in a chloroplast respiratory chain. The immediate electron acceptor for the enzyme in this species is believed to be plastoquinone. Couples the redox reaction to proton translocation, and thus conserves the redox energy in a proton gradient. This is NAD(P)H-quinone oxidoreductase subunit I, chloroplastic from Guardiola tulocarpus.